The following is a 188-amino-acid chain: UPF0398 protein OEOE_1093 (188 aa).

It belongs to the UPF0398 family.

This is UPF0398 protein OEOE_1093 from Oenococcus oeni (strain ATCC BAA-331 / PSU-1).